The following is a 323-amino-acid chain: Delta-aminolevulinic acid dehydratase (323 aa).

Zn(2+) contacts are provided by Cys-118, Cys-120, and Cys-128. The active-site Schiff-base intermediate with substrate is Lys-193. 5-aminolevulinate-binding residues include Arg-203 and Arg-215. Glu-231 provides a ligand contact to Mg(2+). Residue Lys-246 is the Schiff-base intermediate with substrate of the active site. Ser-272 and Tyr-311 together coordinate 5-aminolevulinate.

It belongs to the ALAD family. Homooctamer. Requires Zn(2+) as cofactor.

It catalyses the reaction 2 5-aminolevulinate = porphobilinogen + 2 H2O + H(+). Its pathway is porphyrin-containing compound metabolism; protoporphyrin-IX biosynthesis; coproporphyrinogen-III from 5-aminolevulinate: step 1/4. Functionally, catalyzes an early step in the biosynthesis of tetrapyrroles. Binds two molecules of 5-aminolevulinate per subunit, each at a distinct site, and catalyzes their condensation to form porphobilinogen. This is Delta-aminolevulinic acid dehydratase (hemB) from Helicobacter pylori (strain J99 / ATCC 700824) (Campylobacter pylori J99).